The chain runs to 577 residues: MKKLYWIILIAVVLACSGILMSLHLSVTKEEMTYPSFLDAVNQNQVASVQFKENDSTLKVILNSDKDTTYIVPNPKTENFTEFLLLRNIKVDNSDSYSATKVIQIILIITVGTGVFLFIRTSGGKDKPLMKDAAKNKKAENRVKLGDVAGNAEAKSMVGDIIDFIKEPEKYSALGARMPKGVMLYGPPGTGKTLIAKAIATEAGVPFYAMSGSDFVQMYVGVGASRIRTLFNKAKKSEKAVIFIDEIDAIGKKRARSTSASNDERDQTLNALLTEMSGFHENKGIVVIGATNRLDTLDEALLRPGRFDRQIEVGLPDILARKKILKLYGDKKPLGDDVDLEVLAKNTVSFSGAMLENLLNEAAIQAANEKSSYIQSSHVDKAFYTVIAGSPLQDRSFISEKDKSITAYHEAGHALATKLLQPEQYISKVTIIPSVKGAGGFNLSIPKDSLYQSKRQILCSIQILLAGRVAEELIFGEEEITTGASNDIQKASAMLVDYLNKYGMDDEMGLFSTVVLEDQYDTDFLNKCRNQMHALYDTTKKLMTENKKLLIEITNELLEKESLKGEDIDRICLKEAV.

Topologically, residues 1–3 (MKK) are cytoplasmic. Residues 4–24 (LYWIILIAVVLACSGILMSLH) form a helical membrane-spanning segment. The Extracellular segment spans residues 25–98 (LSVTKEEMTY…IKVDNSDSYS (74 aa)). A helical transmembrane segment spans residues 99–119 (ATKVIQIILIITVGTGVFLFI). Residues 120–577 (RTSGGKDKPL…IDRICLKEAV (458 aa)) lie on the Cytoplasmic side of the membrane. 186–193 (GPPGTGKT) serves as a coordination point for ATP. Residue His-409 participates in Zn(2+) binding. Glu-410 is a catalytic residue. Zn(2+) is bound by residues His-413 and Asp-487.

This sequence in the central section; belongs to the AAA ATPase family. It in the C-terminal section; belongs to the peptidase M41 family. Homohexamer. The cofactor is Zn(2+).

The protein resides in the cell membrane. Functionally, acts as a processive, ATP-dependent zinc metallopeptidase for both cytoplasmic and membrane proteins. Plays a role in the quality control of integral membrane proteins. This Lachnoclostridium phytofermentans (strain ATCC 700394 / DSM 18823 / ISDg) (Clostridium phytofermentans) protein is ATP-dependent zinc metalloprotease FtsH.